An 812-amino-acid chain; its full sequence is Glycerol-3-phosphate acyltransferase (812 aa).

The HXXXXD motif motif lies at 308-313 (CHRSHM).

Belongs to the GPAT/DAPAT family.

It is found in the cell inner membrane. The enzyme catalyses sn-glycerol 3-phosphate + an acyl-CoA = a 1-acyl-sn-glycero-3-phosphate + CoA. It participates in phospholipid metabolism; CDP-diacylglycerol biosynthesis; CDP-diacylglycerol from sn-glycerol 3-phosphate: step 1/3. This Pseudoalteromonas translucida (strain TAC 125) protein is Glycerol-3-phosphate acyltransferase.